Reading from the N-terminus, the 368-residue chain is Quinolinate synthase (368 aa).

Iminosuccinate contacts are provided by His46 and Ser63. [4Fe-4S] cluster is bound at residue Cys110. Iminosuccinate contacts are provided by residues 141 to 143 (YVN) and Ser162. Residue Cys230 participates in [4Fe-4S] cluster binding. Residues 256 to 258 (HPE) and Thr273 each bind iminosuccinate. Cys320 is a binding site for [4Fe-4S] cluster.

This sequence belongs to the quinolinate synthase family. Type 3 subfamily. As to quaternary structure, homotrimer. It depends on [4Fe-4S] cluster as a cofactor.

It is found in the cytoplasm. The enzyme catalyses iminosuccinate + dihydroxyacetone phosphate = quinolinate + phosphate + 2 H2O + H(+). Its pathway is cofactor biosynthesis; NAD(+) biosynthesis; quinolinate from iminoaspartate: step 1/1. Its function is as follows. Catalyzes the condensation of iminoaspartate with dihydroxyacetone phosphate to form quinolinate. The sequence is that of Quinolinate synthase from Bacillus subtilis (strain 168).